The chain runs to 48 residues: Large ribosomal subunit protein bL34c (48 aa).

Positions 18–48 are disordered; the sequence is SGFRSRMATPQGRKTIRNRRKKGRKNLTLRR. The segment covering 31 to 48 has biased composition (basic residues); it reads KTIRNRRKKGRKNLTLRR.

It belongs to the bacterial ribosomal protein bL34 family.

The protein localises to the plastid. Its subcellular location is the chloroplast. This Phaeodactylum tricornutum (strain CCAP 1055/1) protein is Large ribosomal subunit protein bL34c.